A 1207-amino-acid chain; its full sequence is DNA-directed RNA polymerase subunit beta' (1207 aa).

4 residues coordinate Zn(2+): Cys-60, Cys-62, Cys-75, and Cys-78. Mg(2+)-binding residues include Asp-450, Asp-452, and Asp-454. Residues Cys-818, Cys-892, Cys-899, and Cys-902 each coordinate Zn(2+).

It belongs to the RNA polymerase beta' chain family. The RNAP catalytic core consists of 2 alpha, 1 beta, 1 beta' and 1 omega subunit. When a sigma factor is associated with the core the holoenzyme is formed, which can initiate transcription. Requires Mg(2+) as cofactor. The cofactor is Zn(2+).

It catalyses the reaction RNA(n) + a ribonucleoside 5'-triphosphate = RNA(n+1) + diphosphate. Its function is as follows. DNA-dependent RNA polymerase catalyzes the transcription of DNA into RNA using the four ribonucleoside triphosphates as substrates. This chain is DNA-directed RNA polymerase subunit beta', found in Lactococcus lactis subsp. cremoris (strain SK11).